The primary structure comprises 278 residues: Formamidopyrimidine-DNA glycosylase (278 aa).

Proline 2 functions as the Schiff-base intermediate with DNA in the catalytic mechanism. The active-site Proton donor is glutamate 3. Residue lysine 59 is the Proton donor; for beta-elimination activity of the active site. Residues histidine 94, arginine 113, and lysine 154 each contribute to the DNA site. Residues 239–273 (KVHTKKGEFCIKCSSKIEKIKFKGRGTYFCPTCQK) form an FPG-type zinc finger. The Proton donor; for delta-elimination activity role is filled by arginine 263.

The protein belongs to the FPG family. In terms of assembly, monomer. Zn(2+) serves as cofactor.

It carries out the reaction Hydrolysis of DNA containing ring-opened 7-methylguanine residues, releasing 2,6-diamino-4-hydroxy-5-(N-methyl)formamidopyrimidine.. The catalysed reaction is 2'-deoxyribonucleotide-(2'-deoxyribose 5'-phosphate)-2'-deoxyribonucleotide-DNA = a 3'-end 2'-deoxyribonucleotide-(2,3-dehydro-2,3-deoxyribose 5'-phosphate)-DNA + a 5'-end 5'-phospho-2'-deoxyribonucleoside-DNA + H(+). Involved in base excision repair of DNA damaged by oxidation or by mutagenic agents. Acts as a DNA glycosylase that recognizes and removes damaged bases. Has a preference for oxidized purines, such as 7,8-dihydro-8-oxoguanine (8-oxoG). Has AP (apurinic/apyrimidinic) lyase activity and introduces nicks in the DNA strand. Cleaves the DNA backbone by beta-delta elimination to generate a single-strand break at the site of the removed base with both 3'- and 5'-phosphates. This chain is Formamidopyrimidine-DNA glycosylase (mutM), found in Mycoplasmopsis pulmonis (strain UAB CTIP) (Mycoplasma pulmonis).